The chain runs to 122 residues: Large ribosomal subunit protein uL14 (122 aa).

It belongs to the universal ribosomal protein uL14 family. In terms of assembly, part of the 50S ribosomal subunit. Forms a cluster with proteins L3 and L19. In the 70S ribosome, L14 and L19 interact and together make contacts with the 16S rRNA in bridges B5 and B8.

In terms of biological role, binds to 23S rRNA. Forms part of two intersubunit bridges in the 70S ribosome. The chain is Large ribosomal subunit protein uL14 from Lactobacillus helveticus (strain DPC 4571).